The following is a 261-amino-acid chain: tRNA pseudouridine synthase A (261 aa).

Catalysis depends on D51, which acts as the Nucleophile. Y109 lines the substrate pocket.

This sequence belongs to the tRNA pseudouridine synthase TruA family. In terms of assembly, homodimer.

It carries out the reaction uridine(38/39/40) in tRNA = pseudouridine(38/39/40) in tRNA. Functionally, formation of pseudouridine at positions 38, 39 and 40 in the anticodon stem and loop of transfer RNAs. The polypeptide is tRNA pseudouridine synthase A (Shewanella woodyi (strain ATCC 51908 / MS32)).